The sequence spans 564 residues: MEKHAEPEKSLGDKEFQEKELHEKPAPAASEDISGDSSVNKEDGPDPINDNYLSGLRLAVVMFALCISNFLVALDTTILATAVPKISSDFNSLQDVGWYTSSYLLTNCAFQLFYGKLYTRFKVKIVFTVAMIIFEIGSLLCGVAPNSPVFIFGRAIAGLGSAGAFSGALIIVIHSVQAEKRAQYSGMIVGMYGLASVAAPLIGGAFTDHVTWRWCFYINLPCGGVAIAGLLFFFHSPPQAAVKETAAGLWAKIAKFDPFGTFFFLCSMICLLLALQMGGSTYPFTDARIIVLLVLFGLLLVAFIVVQFFDKNATIPPRVMKNRSVAFGMIYMFCVGAQFLVLVTFMPIWFQGVRAMSATDSGIRSLPILLSNTFCVVLAGALVSMTGYYIPFMWASVVLTSIGAGLLTTLTVDASTGKWVGYQIIAGIGGGLGYQQGISVAQTVLKGSDMTIGTAVMVFVQLLGGTILVSAANNILVTRLVENLERLAPHINPEIILRAGASGIKTAVSEADYPFVIEAYNIALTKTFQIALIVSCLGAIGAAGVEWKRGSKKGDSDEPAIMAV.

Positions 1–25 (MEKHAEPEKSLGDKEFQEKELHEKP) are enriched in basic and acidic residues. The segment at 1–46 (MEKHAEPEKSLGDKEFQEKELHEKPAPAASEDISGDSSVNKEDGPD) is disordered. 8 helical membrane passes run 58–78 (LAVVMFALCISNFLVALDTTI), 96–118 (VGWYTSSYLLTNCAFQLFYGKLY), 125–145 (IVFTVAMIIFEIGSLLCGVAP), 156–176 (IAGLGSAGAFSGALIIVIHSV), 186–206 (GMIVGMYGLASVAAPLIGGAF), 214–234 (WCFYINLPCGGVAIAGLLFFF), 259–279 (FGTFFFLCSMICLLLALQMGG), and 289–309 (IIVLLVLFGLLLVAFIVVQFF). N-linked (GlcNAc...) asparagine glycans are attached at residues N312 and N322. The next 4 membrane-spanning stretches (helical) occupy residues 330 to 350 (IYMFCVGAQFLVLVTFMPIWF), 361 to 383 (SGIRSLPILLSNTFCVVLAGALV), 395 to 415 (ASVVLTSIGAGLLTTLTVDAS), and 452 to 472 (IGTAVMVFVQLLGGTILVSAA).

The protein belongs to the major facilitator superfamily. TCR/Tet family.

It is found in the cell membrane. Functionally, efflux pump that might be required for efficient secretion of hypothemycin or other secondary metabolies produced by the hypothemycin gene cluster. The sequence is that of Efflux pump hmp6 from Hypomyces subiculosus (Nectria subiculosa).